A 341-amino-acid polypeptide reads, in one-letter code: GTPase Obg (341 aa).

The Obg domain maps to Ser-2 to Leu-160. Residues Ala-161–Phe-330 enclose the OBG-type G domain. GTP contacts are provided by residues Gly-167–Ser-174, Phe-192–Ser-196, Asp-215–Gly-218, Asn-282–Asp-285, and Ser-311–Asp-313. Ser-174 and Thr-194 together coordinate Mg(2+).

It belongs to the TRAFAC class OBG-HflX-like GTPase superfamily. OBG GTPase family. In terms of assembly, monomer. The cofactor is Mg(2+).

The protein localises to the cytoplasm. Functionally, an essential GTPase which binds GTP, GDP and possibly (p)ppGpp with moderate affinity, with high nucleotide exchange rates and a fairly low GTP hydrolysis rate. Plays a role in control of the cell cycle, stress response, ribosome biogenesis and in those bacteria that undergo differentiation, in morphogenesis control. The sequence is that of GTPase Obg from Leptospira biflexa serovar Patoc (strain Patoc 1 / Ames).